We begin with the raw amino-acid sequence, 495 residues long: UDP-N-acetylmuramoyl-L-alanyl-D-glutamate--2,6-diaminopimelate ligase (495 aa).

Residues Leu27, Ser29, and 44-46 (HQT) contribute to the UDP-N-acetyl-alpha-D-muramoyl-L-alanyl-D-glutamate site. 116–122 (GTNGKTT) contributes to the ATP binding site. UDP-N-acetyl-alpha-D-muramoyl-L-alanyl-D-glutamate contacts are provided by residues Asn157, 158–159 (TT), Ser185, Gln191, and Arg193. N6-carboxylysine is present on Lys225. Residues Arg390, 414-417 (DNPR), Gly465, and Glu469 each bind meso-2,6-diaminopimelate. Residues 414–417 (DNPR) carry the Meso-diaminopimelate recognition motif motif.

Belongs to the MurCDEF family. MurE subfamily. It depends on Mg(2+) as a cofactor. In terms of processing, carboxylation is probably crucial for Mg(2+) binding and, consequently, for the gamma-phosphate positioning of ATP.

Its subcellular location is the cytoplasm. The catalysed reaction is UDP-N-acetyl-alpha-D-muramoyl-L-alanyl-D-glutamate + meso-2,6-diaminopimelate + ATP = UDP-N-acetyl-alpha-D-muramoyl-L-alanyl-gamma-D-glutamyl-meso-2,6-diaminopimelate + ADP + phosphate + H(+). Its pathway is cell wall biogenesis; peptidoglycan biosynthesis. In terms of biological role, catalyzes the addition of meso-diaminopimelic acid to the nucleotide precursor UDP-N-acetylmuramoyl-L-alanyl-D-glutamate (UMAG) in the biosynthesis of bacterial cell-wall peptidoglycan. The sequence is that of UDP-N-acetylmuramoyl-L-alanyl-D-glutamate--2,6-diaminopimelate ligase from Sodalis glossinidius (strain morsitans).